The following is a 276-amino-acid chain: Proteasome subunit beta type-8 (276 aa).

Positions 1–33 (MALLDVCGAPRGQRPESALPVAGSGRRSDPGHY) are disordered. A propeptide spans 1 to 72 (MALLDVCGAP…RNVQIEMAHG (72 aa)) (removed in mature form). The residue at position 5 (aspartate 5) is a Phosphothreonine. Catalysis depends on threonine 73, which acts as the Nucleophile.

It belongs to the peptidase T1B family. As to quaternary structure, the 26S proteasome consists of a 20S proteasome core and two 19S regulatory subunits. The 20S proteasome core is composed of 28 subunits that are arranged in four stacked rings, resulting in a barrel-shaped structure. The two end rings are each formed by seven alpha subunits, and the two central rings are each formed by seven beta subunits. The catalytic chamber with the active sites is on the inside of the barrel. Component of the immunoproteasome, where it displaces the equivalent housekeeping subunit PSMB5. Component of the spermatoproteasome, a form of the proteasome specifically found in testis. Directly interacts with POMP. Interacts with TAP1. In terms of assembly, (Microbial infection) Interacts with HIV-1 TAT protein. In terms of processing, autocleaved. The resulting N-terminal Thr residue of the mature subunit is responsible for the nucleophile proteolytic activity.

The protein resides in the cytoplasm. It localises to the nucleus. It catalyses the reaction Cleavage of peptide bonds with very broad specificity.. The proteasome is a multicatalytic proteinase complex which is characterized by its ability to cleave peptides with Arg, Phe, Tyr, Leu, and Glu adjacent to the leaving group at neutral or slightly basic pH. The proteasome has an ATP-dependent proteolytic activity. This subunit is involved in antigen processing to generate class I binding peptides. Replacement of PSMB5 by PSMB8 increases the capacity of the immunoproteasome to cleave model peptides after hydrophobic and basic residues. Involved in the generation of spliced peptides resulting from the ligation of two separate proteasomal cleavage products that are not contiguous in the parental protein. Acts as a major component of interferon gamma-induced sensitivity. Plays a key role in apoptosis via the degradation of the apoptotic inhibitor MCL1. May be involved in the inflammatory response pathway. In cancer cells, substitution of isoform 1 (E2) by isoform 2 (E1) results in immunoproteasome deficiency. Required for the differentiation of preadipocytes into adipocytes. In Homo sapiens (Human), this protein is Proteasome subunit beta type-8 (PSMB8).